The primary structure comprises 716 residues: Putative mannosyltransferase YkcB (716 aa).

8 helical membrane passes run 8–28 (LDIVLLLILLASAFLNIYNIW), 44–64 (MMQSFHNFFYASFDAAGFITV), 87–107 (SVILPQALAGVGSVLLMYLLI), 118–135 (IASFVMACTPIAVAVART), 137–157 (NVDALLVFFLLLATWLLFKAI), 159–179 (KGKLIWLLAAFFVVGVGFNTK), 180–200 (MLQAYMILPAFLLFYLIAANA), and 206–226 (IVSLVSALAVLAAVSLSWPLI). Positions 260–363 (TGQNSGGGQG…GSGMFGTGTP (104 aa)) are disordered. Residues 278 to 289 (EMSSSDNTQAPP) are compositionally biased toward polar residues. Residues 290–307 (NQSSSNSSSSDGKSSNGN) show a composition bias toward low complexity. The span at 318–347 (PSGGQGGPPSGGDGGQGGPGGDGGKGGTGT) shows a compositional bias: gly residues. The next 6 helical transmembrane spans lie at 376–396 (QISWLLPFAIFGIAGLLIAGA), 409–429 (TVFWVAWLVPIAGFFSVAEFF), 433–453 (YLIMLAPPIAALVGAGWVALV), 462–482 (WKAWLLPGAIIATTGFELFIL), 491–511 (VGWSIGVGVIGVLSAIALLLF), and 518–538 (FSYYVSLAALLALLVMPMYWA). The interval 664–716 (VASEKWQSSSDQKTENTDSADTSSSKASGENGKMGGPGGMNQSATLYELHADE) is disordered. Residues 680–694 (TDSADTSSSKASGEN) are compositionally biased toward low complexity.

This sequence belongs to the glycosyltransferase 39 family.

The protein resides in the cell membrane. This chain is Putative mannosyltransferase YkcB (ykcB), found in Bacillus subtilis (strain 168).